The chain runs to 419 residues: F-box/FBD/LRR-repeat protein At4g26340 (419 aa).

The F-box domain maps to 1 to 53 (MDRISQLSDDLLLQILSFIPGKDVVATSLLSKRWQSLWMLVSELEYDDSYHTG). LRR repeat units lie at residues 55 to 81 (YKSF…HLNL), 132 to 159 (TLRL…HLKT), 160 to 185 (VDYE…FVER), 187 to 208 (DQDL…SMID), 226 to 253 (YLNI…HVDI), 254 to 284 (TQGV…MCPS), and 299 to 324 (VVKG…KLID). One can recognise an FBD domain in the interval 339 to 389 (GWKLPSSVPECLLFSLEAFEWIGYKGRRGDREVATYVLKNAACLRTAKFSP).

This chain is F-box/FBD/LRR-repeat protein At4g26340, found in Arabidopsis thaliana (Mouse-ear cress).